Reading from the N-terminus, the 235-residue chain is Uridylate kinase (235 aa).

12–15 (KISG) provides a ligand contact to ATP. Gly54 contributes to the UMP binding site. Residues Gly55 and Arg59 each contribute to the ATP site. Residues Asp72 and 133 to 140 (TGNPFFST) each bind UMP. Positions 166 and 169 each coordinate ATP.

It belongs to the UMP kinase family. As to quaternary structure, homohexamer.

Its subcellular location is the cytoplasm. The catalysed reaction is UMP + ATP = UDP + ADP. It functions in the pathway pyrimidine metabolism; CTP biosynthesis via de novo pathway; UDP from UMP (UMPK route): step 1/1. Inhibited by UTP. Functionally, catalyzes the reversible phosphorylation of UMP to UDP. This Acetivibrio thermocellus (strain ATCC 27405 / DSM 1237 / JCM 9322 / NBRC 103400 / NCIMB 10682 / NRRL B-4536 / VPI 7372) (Clostridium thermocellum) protein is Uridylate kinase.